The sequence spans 347 residues: S-adenosylmethionine:tRNA ribosyltransferase-isomerase (347 aa).

It belongs to the QueA family. Monomer.

Its subcellular location is the cytoplasm. The catalysed reaction is 7-aminomethyl-7-carbaguanosine(34) in tRNA + S-adenosyl-L-methionine = epoxyqueuosine(34) in tRNA + adenine + L-methionine + 2 H(+). The protein operates within tRNA modification; tRNA-queuosine biosynthesis. In terms of biological role, transfers and isomerizes the ribose moiety from AdoMet to the 7-aminomethyl group of 7-deazaguanine (preQ1-tRNA) to give epoxyqueuosine (oQ-tRNA). The polypeptide is S-adenosylmethionine:tRNA ribosyltransferase-isomerase (Xylella fastidiosa (strain M23)).